A 257-amino-acid polypeptide reads, in one-letter code: Acyl-[acyl-carrier-protein]--UDP-N-acetylglucosamine O-acyltransferase (257 aa).

This sequence belongs to the transferase hexapeptide repeat family. LpxA subfamily. In terms of assembly, homotrimer.

It localises to the cytoplasm. The enzyme catalyses a (3R)-hydroxyacyl-[ACP] + UDP-N-acetyl-alpha-D-glucosamine = a UDP-3-O-[(3R)-3-hydroxyacyl]-N-acetyl-alpha-D-glucosamine + holo-[ACP]. It participates in glycolipid biosynthesis; lipid IV(A) biosynthesis; lipid IV(A) from (3R)-3-hydroxytetradecanoyl-[acyl-carrier-protein] and UDP-N-acetyl-alpha-D-glucosamine: step 1/6. Its function is as follows. Involved in the biosynthesis of lipid A, a phosphorylated glycolipid that anchors the lipopolysaccharide to the outer membrane of the cell. In Anaeromyxobacter dehalogenans (strain 2CP-1 / ATCC BAA-258), this protein is Acyl-[acyl-carrier-protein]--UDP-N-acetylglucosamine O-acyltransferase.